We begin with the raw amino-acid sequence, 843 residues long: Receptor-like serine/threonine-protein kinase SD1-7 (843 aa).

The first 31 residues, 1–31 (MRSVPNYHHSFFIFLILILFLAFSVSPNTLS), serve as a signal peptide directing secretion. Residues 32-151 (ATESLTISSN…NNRLLWQSFD (120 aa)) enclose the Bulb-type lectin domain. Over 32 to 435 (ATESLTISSN…LEDKRIKNEK (404 aa)) the chain is Extracellular. Residues Asn-41, Asn-92, Asn-116, Asn-236, and Asn-251 are each glycosylated (N-linked (GlcNAc...) asparagine). Residues 286–322 (PKDLCDNYKVCGNFGYCDSNSLPNCYCIKGFKPVNEQ) enclose the EGF-like; atypical domain. 4 cysteine pairs are disulfide-bonded: Cys-290-Cys-302, Cys-296-Cys-310, Cys-372-Cys-397, and Cys-376-Cys-382. The PAN domain occupies 341–422 (CDGRDGFTRL…GGQDLYVRLA (82 aa)). N-linked (GlcNAc...) asparagine glycosylation is present at Asn-381. Residues 436–456 (IIGSSIGVSILLLLSFVIFHF) traverse the membrane as a helical segment. Residues 457 to 843 (WKRKQKRSIT…QITLSVIDAR (387 aa)) lie on the Cytoplasmic side of the membrane. A Protein kinase domain is found at 519 to 809 (FSNDNKLGQG…AIPQPKRPGF (291 aa)). ATP is bound by residues 525 to 533 (LGQGGFGIV) and Lys-547. Ser-553 is modified (phosphoserine). Positions 608–625 (TRSSNLNWQKRFDIINGI) are caM-binding. Asp-644 serves as the catalytic Proton acceptor. Ser-648 and Ser-661 each carry phosphoserine. Thr-678 carries the post-translational modification Phosphothreonine. A Phosphoserine modification is found at Ser-820.

The protein belongs to the protein kinase superfamily. Ser/Thr protein kinase family. Interacts with PUB9, PUB13, PUB14 and PUB38. Post-translationally, autophosphorylated on serine and threonine residues. As to expression, mostly expressed in leaves, and, to a lower extent, in stems and flower buds.

The protein resides in the cell membrane. The catalysed reaction is L-seryl-[protein] + ATP = O-phospho-L-seryl-[protein] + ADP + H(+). It catalyses the reaction L-threonyl-[protein] + ATP = O-phospho-L-threonyl-[protein] + ADP + H(+). Its function is as follows. Involved in the regulation of cellular expansion and differentiation. Mediates subcellular relocalization of PUB9 from nucleus to plasma membrane in a protein-phosphorylation-dependent manner. May be involved in the abscisic acid-mediated signaling pathway, at least during germination. The protein is Receptor-like serine/threonine-protein kinase SD1-7 (SD17) of Arabidopsis thaliana (Mouse-ear cress).